The sequence spans 586 residues: CTP synthase (586 aa).

The segment at 1–265 is amidoligase domain; the sequence is MVRFIFVTGG…ENKVLNFFNI (265 aa). CTP is bound at residue Ser13. Residue Ser13 coordinates UTP. ATP is bound by residues 14-19 and Asp71; that span reads SLGKGI. 2 residues coordinate Mg(2+): Asp71 and Glu139. Residues 146-148, 186-191, and Lys222 each bind CTP; these read DIE and KTKPTQ. Residues 186–191 and Lys222 each bind UTP; that span reads KTKPTQ. Positions 290–582 constitute a Glutamine amidotransferase type-1 domain; the sequence is KIAIITKYHK…IKATIEYNKS (293 aa). Residue Gly352 coordinates L-glutamine. Cys379 serves as the catalytic Nucleophile; for glutamine hydrolysis. L-glutamine contacts are provided by residues 380–383 and Glu403; that span reads FGMQ. Residues 429–473 form the RPE1 insert domain; that stretch reads AHISKCTYSEAFECDASTVYTNIHEDSNNLSTDKLQIETNFRNMS. L-glutamine is bound at residue Arg510. Active-site residues include His555 and Glu557.

It belongs to the CTP synthase family. In terms of assembly, homotetramer.

It carries out the reaction UTP + L-glutamine + ATP + H2O = CTP + L-glutamate + ADP + phosphate + 2 H(+). It catalyses the reaction L-glutamine + H2O = L-glutamate + NH4(+). The enzyme catalyses UTP + NH4(+) + ATP = CTP + ADP + phosphate + 2 H(+). It functions in the pathway pyrimidine metabolism; CTP biosynthesis via de novo pathway; CTP from UDP: step 2/2. Allosterically activated by GTP, when glutamine is the substrate; GTP has no effect on the reaction when ammonia is the substrate. The allosteric effector GTP functions by stabilizing the protein conformation that binds the tetrahedral intermediate(s) formed during glutamine hydrolysis. Inhibited by the product CTP, via allosteric rather than competitive inhibition. Its function is as follows. Catalyzes the ATP-dependent amination of UTP to CTP with either L-glutamine or ammonia as the source of nitrogen. Regulates intracellular CTP levels through interactions with the four ribonucleotide triphosphates. The chain is CTP synthase from Rickettsia prowazekii (strain Madrid E).